A 189-amino-acid polypeptide reads, in one-letter code: Adenylate kinase (189 aa).

Position 11 to 16 (11 to 16) interacts with ATP; that stretch reads GSGKGT. An NMP region spans residues 31 to 60; the sequence is STGDVLRAEIKNGTELGKTAKGYIDQGQLI. AMP contacts are provided by residues Thr32, Arg37, 58–60, 86–89, and Gln93; these read QLI and GFPR. The interval 127–137 is LID; that stretch reads KRGKDSGRADD. Arg128 serves as a coordination point for ATP. The AMP site is built by Arg134 and Arg145. Gly173 is a binding site for ATP.

It belongs to the adenylate kinase family. Monomer.

The protein resides in the cytoplasm. The enzyme catalyses AMP + ATP = 2 ADP. It participates in purine metabolism; AMP biosynthesis via salvage pathway; AMP from ADP: step 1/1. In terms of biological role, catalyzes the reversible transfer of the terminal phosphate group between ATP and AMP. Plays an important role in cellular energy homeostasis and in adenine nucleotide metabolism. The polypeptide is Adenylate kinase (Bacteroides thetaiotaomicron (strain ATCC 29148 / DSM 2079 / JCM 5827 / CCUG 10774 / NCTC 10582 / VPI-5482 / E50)).